The chain runs to 196 residues: Pyridoxal 5'-phosphate synthase subunit PdxT (196 aa).

52 to 54 (GES) serves as a coordination point for L-glutamine. Cys84 acts as the Nucleophile in catalysis. Residues Arg113 and 141–142 (IR) contribute to the L-glutamine site. Active-site charge relay system residues include His178 and Glu180.

It belongs to the glutaminase PdxT/SNO family. In the presence of PdxS, forms a dodecamer of heterodimers. Only shows activity in the heterodimer.

It carries out the reaction aldehydo-D-ribose 5-phosphate + D-glyceraldehyde 3-phosphate + L-glutamine = pyridoxal 5'-phosphate + L-glutamate + phosphate + 3 H2O + H(+). The catalysed reaction is L-glutamine + H2O = L-glutamate + NH4(+). It participates in cofactor biosynthesis; pyridoxal 5'-phosphate biosynthesis. Catalyzes the hydrolysis of glutamine to glutamate and ammonia as part of the biosynthesis of pyridoxal 5'-phosphate. The resulting ammonia molecule is channeled to the active site of PdxS. The chain is Pyridoxal 5'-phosphate synthase subunit PdxT from Pyrococcus abyssi (strain GE5 / Orsay).